Here is an 874-residue protein sequence, read N- to C-terminus: Alanine--tRNA ligase (874 aa).

H561, H565, C663, and H667 together coordinate Zn(2+).

This sequence belongs to the class-II aminoacyl-tRNA synthetase family. Zn(2+) is required as a cofactor.

It localises to the cytoplasm. It carries out the reaction tRNA(Ala) + L-alanine + ATP = L-alanyl-tRNA(Ala) + AMP + diphosphate. Catalyzes the attachment of alanine to tRNA(Ala) in a two-step reaction: alanine is first activated by ATP to form Ala-AMP and then transferred to the acceptor end of tRNA(Ala). Also edits incorrectly charged Ser-tRNA(Ala) and Gly-tRNA(Ala) via its editing domain. In Trichodesmium erythraeum (strain IMS101), this protein is Alanine--tRNA ligase.